The sequence spans 219 residues: Clathrin light chain (219 aa).

A disordered region spans residues 32 to 136 (AEITGGSASA…KKEELRQQSK (105 aa)). An involved in binding clathrin heavy chain region spans residues 96–158 (PPPSREEPEK…SISKTKLASR (63 aa)). Basic and acidic residues predominate over residues 99–136 (SREEPEKIRKWREEQKQRLEEKDIEEERKKEELRQQSK).

This sequence belongs to the clathrin light chain family. As to quaternary structure, clathrin coats are formed from molecules containing 3 heavy chains and 3 light chains.

The protein localises to the cytoplasmic vesicle membrane. The protein resides in the membrane. It is found in the coated pit. Functionally, clathrin is the major protein of the polyhedral coat of coated pits and vesicles. In Drosophila melanogaster (Fruit fly), this protein is Clathrin light chain (Clc).